A 1373-amino-acid chain; its full sequence is DNA-directed RNA polymerase subunit beta (1373 aa).

Belongs to the RNA polymerase beta chain family. The RNAP catalytic core consists of 2 alpha, 1 beta, 1 beta' and 1 omega subunit. When a sigma factor is associated with the core the holoenzyme is formed, which can initiate transcription.

The enzyme catalyses RNA(n) + a ribonucleoside 5'-triphosphate = RNA(n+1) + diphosphate. DNA-dependent RNA polymerase catalyzes the transcription of DNA into RNA using the four ribonucleoside triphosphates as substrates. The protein is DNA-directed RNA polymerase subunit beta of Rickettsia massiliae.